The sequence spans 360 residues: RGG repeats nuclear RNA binding protein B (360 aa).

2 disordered regions span residues 1–216 and 250–360; these read MASV…DKEM and MQQL…TLGK. Ala2 carries the N-acetylalanine modification. Positions 58–77 are enriched in gly residues; the sequence is PGGGRGAGRGGSYGRGGRGG. Composition is skewed to basic and acidic residues over residues 99–108 and 132–157; these read RRSEEGDGAR and DSER…RDGA. Positions 162–176 are enriched in polar residues; the sequence is WGTTQDDITPVTEES. Basic and acidic residues-rich tracts occupy residues 184 to 216, 258 to 283, and 311 to 336; these read LTVE…DKEM, SNND…EKTR, and REGR…RNQR. The FF domain occupies 223-288; that stretch reads KVLEEKKKAL…EEKTRKSLSI (66 aa). Ser258 bears the Phosphoserine mark.

The protein belongs to the SERBP1-HABP4 family.

The protein resides in the nucleus. It is found in the cytoplasm. Its subcellular location is the perinuclear region. Ribosome-binding protein that acts as a regulator of mRNA translation by promoting ribosome inactivation. Binds RNA. This chain is RGG repeats nuclear RNA binding protein B, found in Arabidopsis thaliana (Mouse-ear cress).